We begin with the raw amino-acid sequence, 163 residues long: 18 kDa protein (163 aa).

This chain is 18 kDa protein, found in Mus musculus (Mouse).